Consider the following 1681-residue polypeptide: Y' element ATP-dependent helicase protein 1 copy 2 (1681 aa).

The 178-residue stretch at 683 to 860 (EIYMADTPSV…LQRIGLTGLA (178 aa)) folds into the Helicase ATP-binding domain. Position 696-703 (696-703 (APPGYGKT)) interacts with ATP. Residues 917 to 1066 (KLLLALFEIE…EFYGLESKKG (150 aa)) enclose the Helicase C-terminal domain. A compositionally biased stretch (low complexity) spans 1140–1283 (ANASTNATTN…ATTTESTNAS (144 aa)). Residues 1140–1307 (ANASTNATTN…RFHPVTDINK (168 aa)) form a disordered region. Positions 1284 to 1307 (AKEDANKDGNAEDNRFHPVTDINK) are enriched in basic and acidic residues.

This sequence belongs to the helicase family. Yeast subtelomeric Y' repeat subfamily.

Catalyzes DNA unwinding and is involved in telomerase-independent telomere maintenance. In Saccharomyces cerevisiae (strain ATCC 204508 / S288c) (Baker's yeast), this protein is Y' element ATP-dependent helicase protein 1 copy 2 (YRF1-2).